Reading from the N-terminus, the 130-residue chain is Small ribosomal subunit protein uS8A (130 aa).

It belongs to the universal ribosomal protein uS8 family. Component of the small ribosomal subunit (SSU). Mature yeast ribosomes consist of a small (40S) and a large (60S) subunit. The 40S small subunit contains 1 molecule of ribosomal RNA (18S rRNA) and at least 33 different proteins. The large 60S subunit contains 3 rRNA molecules (25S, 5.8S and 5S rRNA) and at least 46 different proteins.

The protein localises to the cytoplasm. Its subcellular location is the nucleus. Functionally, component of the ribosome, a large ribonucleoprotein complex responsible for the synthesis of proteins in the cell. The small ribosomal subunit (SSU) binds messenger RNAs (mRNAs) and translates the encoded message by selecting cognate aminoacyl-transfer RNA (tRNA) molecules. The large subunit (LSU) contains the ribosomal catalytic site termed the peptidyl transferase center (PTC), which catalyzes the formation of peptide bonds, thereby polymerizing the amino acids delivered by tRNAs into a polypeptide chain. The nascent polypeptides leave the ribosome through a tunnel in the LSU and interact with protein factors that function in enzymatic processing, targeting, and the membrane insertion of nascent chains at the exit of the ribosomal tunnel. In Schizosaccharomyces pombe (strain 972 / ATCC 24843) (Fission yeast), this protein is Small ribosomal subunit protein uS8A (rps2201).